A 345-amino-acid chain; its full sequence is Protein RecA (345 aa).

Residue 63 to 70 (GPESSGKT) participates in ATP binding. A disordered region spans residues 326 to 345 (VLSDALMTDPEPDADGTPED). Positions 335 to 345 (PEPDADGTPED) are enriched in acidic residues.

This sequence belongs to the RecA family.

Its subcellular location is the cytoplasm. Its function is as follows. Can catalyze the hydrolysis of ATP in the presence of single-stranded DNA, the ATP-dependent uptake of single-stranded DNA by duplex DNA, and the ATP-dependent hybridization of homologous single-stranded DNAs. It interacts with LexA causing its activation and leading to its autocatalytic cleavage. The protein is Protein RecA of Gluconobacter oxydans (strain 621H) (Gluconobacter suboxydans).